The chain runs to 170 residues: Photosystem I assembly protein Ycf3 (170 aa).

TPR repeat units lie at residues 35–68 (AFTY…EIDP), 72–105 (SYIL…NPFL), and 120–153 (GEQA…TPGN).

This sequence belongs to the Ycf3 family.

The protein resides in the plastid. It is found in the chloroplast thylakoid membrane. Essential for the assembly of the photosystem I (PSI) complex. May act as a chaperone-like factor to guide the assembly of the PSI subunits. The polypeptide is Photosystem I assembly protein Ycf3 (Zea mays (Maize)).